The sequence spans 98 residues: Integration host factor subunit beta (98 aa).

The protein belongs to the bacterial histone-like protein family. As to quaternary structure, heterodimer of an alpha and a beta chain.

This protein is one of the two subunits of integration host factor, a specific DNA-binding protein that functions in genetic recombination as well as in transcriptional and translational control. The sequence is that of Integration host factor subunit beta from Pseudomonas putida (strain GB-1).